The sequence spans 243 residues: Zinc import ATP-binding protein ZnuC (243 aa).

Residues 8–225 (LNLSNVSYYI…SEFQKLFGHH (218 aa)) enclose the ABC transporter domain. 40-47 (GPNGAGKS) contributes to the ATP binding site.

The protein belongs to the ABC transporter superfamily. Zinc importer (TC 3.A.1.15.5) family. As to quaternary structure, the complex is composed of two ATP-binding proteins (ZnuC), two transmembrane proteins (ZnuB) and a solute-binding protein (ZnuA).

It is found in the cell inner membrane. The catalysed reaction is Zn(2+)(out) + ATP(in) + H2O(in) = Zn(2+)(in) + ADP(in) + phosphate(in) + H(+)(in). Part of the ABC transporter complex ZnuABC involved in zinc import. Responsible for energy coupling to the transport system. The polypeptide is Zinc import ATP-binding protein ZnuC (Psychrobacter cryohalolentis (strain ATCC BAA-1226 / DSM 17306 / VKM B-2378 / K5)).